An 82-amino-acid polypeptide reads, in one-letter code: Large ribosomal subunit protein bL31B-2 (82 aa).

It belongs to the bacterial ribosomal protein bL31 family. Type B subfamily. Part of the 50S ribosomal subunit.

This chain is Large ribosomal subunit protein bL31B-2, found in Streptomyces avermitilis (strain ATCC 31267 / DSM 46492 / JCM 5070 / NBRC 14893 / NCIMB 12804 / NRRL 8165 / MA-4680).